Consider the following 174-residue polypeptide: Ribosome rescue factor SmrB (174 aa).

The Smr domain maps to 96-171 (LDLHGLTQQQ…GDAAILVLIE (76 aa)).

This sequence belongs to the SmrB family. Associates with collided ribosomes, but not with correctly translating polysomes.

Acts as a ribosome collision sensor. Detects stalled/collided disomes (pairs of ribosomes where the leading ribosome is stalled and a second ribosome has collided with it) and endonucleolytically cleaves mRNA at the 5' boundary of the stalled ribosome. Stalled/collided disomes form a new interface (primarily via the 30S subunits) that binds SmrB. Cleaved mRNA becomes available for tmRNA ligation, leading to ribosomal subunit dissociation and rescue of stalled ribosomes. In Tolumonas auensis (strain DSM 9187 / NBRC 110442 / TA 4), this protein is Ribosome rescue factor SmrB.